Consider the following 1462-residue polypeptide: Gag-Pol polyprotein (1462 aa).

G2 is lipidated: N-myristoyl glycine; by host. Residues 7-31 form an interaction with Gp41 region; it reads VLRGKKADELEKVRLRPNGKKRYRL. A Nuclear export signal motif is present at residues 16 to 22; sequence LEKVRLR. Residues 26–32 carry the Nuclear localization signal motif; that stretch reads KKRYRLK. An interaction with human PPIA/CYPA and NUP153 region spans residues 191–228; sequence NCVGDHQAAMQIIREIINEEAADWDAQHPIPGPLPAGQ. Positions 279–365 are dimerization/Multimerization of capsid protein p24; it reads YNPTNILDVK…GGPSQKARLM (87 aa). CCHC-type zinc fingers lie at residues 389–406 and 410–427; these read IRCW…QCRA and QGCW…NCPE. The segment at 433–509 is disordered; the sequence is LDGPTGKAAP…DAPQRGDRGL (77 aa). Polar residues predominate over residues 448-465; the sequence is PSSSGADTNSTPNRSSSG. Basic and acidic residues-rich tracts occupy residues 472 to 482 and 497 to 507; these read AAREKAERAEG and AGRDAPQRGDR. Residues 512 to 516 are dimerization of protease; sequence PQFSL. Residues 532–601 enclose the Peptidase A2 domain; sequence EVLLDTGADD…PINIFGRNIL (70 aa). The For protease activity; shared with dimeric partner role is filled by D536. Dimerization of protease stretches follow at residues 560-566 and 599-611; these read GIGGFIN and NILA…LNLP. A Reverse transcriptase domain is found at 655 to 845; it reads GQLEEAPPTN…PFQWMGYELW (191 aa). Positions 720, 795, and 796 each coordinate Mg(2+). Positions 837–845 are RT 'primer grip'; that stretch reads FQWMGYELW. The Tryptophan repeat motif signature appears at 1007–1023; it reads WEQWWDNYWQVTWVPEW. In terms of domain architecture, RNase H type-1 spans 1043–1166; the sequence is IPGTETFYTD…VDHLVSQGIR (124 aa). The Mg(2+) site is built by D1052, E1087, D1107, and D1158. The segment at 1172–1213 adopts an Integrase-type zinc-finger fold; that stretch reads EKIEPAQEEHEKYHSNIKELTHKFGIPQLVARQIVNTCAQCQ. Positions 1181, 1185, 1209, and 1212 each coordinate Zn(2+). The 152-residue stretch at 1223 to 1374 folds into the Integrase catalytic domain; it reads VNAEIGVWQM…PAERLINMIT (152 aa). Positions 1233, 1285, and 1321 each coordinate Mg(2+). The segment at residues 1392-1439 is a DNA-binding region (integrase-type); that stretch reads FQVYYREGRDQLWKGPGELLWKGDGAVIVKVGADIKVVPRRKAKIIRD.

As to quaternary structure, homotrimer; further assembles as hexamers of trimers. Interacts with gp41 (via C-terminus). Interacts with host CALM1; this interaction induces a conformational change in the Matrix protein, triggering exposure of the myristate group. Interacts with host AP3D1; this interaction allows the polyprotein trafficking to multivesicular bodies during virus assembly. Part of the pre-integration complex (PIC) which is composed of viral genome, matrix protein, Vpr and integrase. Homodimer; the homodimer further multimerizes as homohexamers or homopentamers. Interacts with human PPIA/CYPA. Interacts with human NUP153. Interacts with host PDZD8; this interaction stabilizes the capsid. Interacts with monkey TRIM5; this interaction destabilizes the capsid. In terms of assembly, homodimer, whose active site consists of two apposed aspartic acid residues. As to quaternary structure, heterodimer of p66 RT and p51 RT (RT p66/p51). Heterodimerization of RT is essential for DNA polymerase activity. The overall folding of the subdomains is similar in p66 RT and p51 RT but the spatial arrangements of the subdomains are dramatically different. Homotetramer; may further associate as a homohexadecamer. Part of the pre-integration complex (PIC) which is composed of viral genome, matrix protein, Vpr and integrase. Interacts with human SMARCB1/INI1 and human PSIP1/LEDGF isoform 1. Interacts with human KPNA3; this interaction might play a role in nuclear import of the pre-integration complex. Interacts with human NUP153; this interaction might play a role in nuclear import of the pre-integration complex. It depends on Mg(2+) as a cofactor. In terms of processing, specific enzymatic cleavages by the viral protease yield mature proteins. The protease is released by autocatalytic cleavage. The polyprotein is cleaved during and after budding, this process is termed maturation. Proteolytic cleavage of p66 RT removes the RNase H domain to yield the p51 RT subunit. Nucleocapsid protein p7 might be further cleaved after virus entry.

It localises to the host cell membrane. It is found in the host endosome. The protein resides in the host multivesicular body. The protein localises to the virion membrane. Its subcellular location is the host nucleus. It localises to the host cytoplasm. It is found in the virion. It catalyses the reaction Endopeptidase for which the P1 residue is preferably hydrophobic.. It carries out the reaction Endohydrolysis of RNA in RNA/DNA hybrids. Three different cleavage modes: 1. sequence-specific internal cleavage of RNA. Human immunodeficiency virus type 1 and Moloney murine leukemia virus enzymes prefer to cleave the RNA strand one nucleotide away from the RNA-DNA junction. 2. RNA 5'-end directed cleavage 13-19 nucleotides from the RNA end. 3. DNA 3'-end directed cleavage 15-20 nucleotides away from the primer terminus.. The enzyme catalyses 3'-end directed exonucleolytic cleavage of viral RNA-DNA hybrid.. The catalysed reaction is DNA(n) + a 2'-deoxyribonucleoside 5'-triphosphate = DNA(n+1) + diphosphate. With respect to regulation, protease: The viral protease is inhibited by many synthetic protease inhibitors (PIs), such as amprenavir, atazanavir, indinavir, loprinavir, nelfinavir, ritonavir and saquinavir. Use of protease inhibitors in tritherapy regimens permit more ambitious therapeutic strategies. Reverse transcriptase/ribonuclease H: RT can be inhibited either by nucleoside RT inhibitors (NRTIs) or by non nucleoside RT inhibitors (NNRTIs). NRTIs act as chain terminators, whereas NNRTIs inhibit DNA polymerization by binding a small hydrophobic pocket near the RT active site and inducing an allosteric change in this region. Classical NRTIs are abacavir, adefovir (PMEA), didanosine (ddI), lamivudine (3TC), stavudine (d4T), tenofovir (PMPA), zalcitabine (ddC), and zidovudine (AZT). Classical NNRTIs are atevirdine (BHAP U-87201E), delavirdine, efavirenz (DMP-266), emivirine (I-EBU), and nevirapine (BI-RG-587). The tritherapies used as a basic effective treatment of AIDS associate two NRTIs and one NNRTI. Mediates, with Gag polyprotein, the essential events in virion assembly, including binding the plasma membrane, making the protein-protein interactions necessary to create spherical particles, recruiting the viral Env proteins, and packaging the genomic RNA via direct interactions with the RNA packaging sequence (Psi). Gag-Pol polyprotein may regulate its own translation, by the binding genomic RNA in the 5'-UTR. At low concentration, the polyprotein would promote translation, whereas at high concentration, the polyprotein would encapsidate genomic RNA and then shut off translation. Its function is as follows. Targets the polyprotein to the plasma membrane via a multipartite membrane-binding signal, that includes its myristoylated N-terminus. Matrix protein is part of the pre-integration complex. Implicated in the release from host cell mediated by Vpu. Binds to RNA. In terms of biological role, forms the conical core that encapsulates the genomic RNA-nucleocapsid complex in the virion. Most core are conical, with only 7% tubular. The core is constituted by capsid protein hexamer subunits. The core is disassembled soon after virion entry. Host restriction factors such as TRIM5-alpha or TRIMCyp bind retroviral capsids and cause premature capsid disassembly, leading to blocks in reverse transcription. Capsid restriction by TRIM5 is one of the factors which restricts HIV-1 to the human species. Host PIN1 apparently facilitates the virion uncoating. On the other hand, interactions with PDZD8 or CYPA stabilize the capsid. Functionally, encapsulates and protects viral dimeric unspliced genomic RNA (gRNA). Binds these RNAs through its zinc fingers. Acts as a nucleic acid chaperone which is involved in rearangement of nucleic acid secondary structure during gRNA retrotranscription. Also facilitates template switch leading to recombination. As part of the polyprotein, participates in gRNA dimerization, packaging, tRNA incorporation and virion assembly. Aspartyl protease that mediates proteolytic cleavages of Gag and Gag-Pol polyproteins during or shortly after the release of the virion from the plasma membrane. Cleavages take place as an ordered, step-wise cascade to yield mature proteins. This process is called maturation. Displays maximal activity during the budding process just prior to particle release from the cell. Also cleaves Nef and Vif, probably concomitantly with viral structural proteins on maturation of virus particles. Hydrolyzes host EIF4GI and PABP1 in order to shut off the capped cellular mRNA translation. The resulting inhibition of cellular protein synthesis serves to ensure maximal viral gene expression and to evade host immune response. Its function is as follows. Multifunctional enzyme that converts the viral RNA genome into dsDNA in the cytoplasm, shortly after virus entry into the cell. This enzyme displays a DNA polymerase activity that can copy either DNA or RNA templates, and a ribonuclease H (RNase H) activity that cleaves the RNA strand of RNA-DNA heteroduplexes in a partially processive 3' to 5' endonucleasic mode. Conversion of viral genomic RNA into dsDNA requires many steps. A tRNA(3)-Lys binds to the primer-binding site (PBS) situated at the 5'-end of the viral RNA. RT uses the 3' end of the tRNA primer to perform a short round of RNA-dependent minus-strand DNA synthesis. The reading proceeds through the U5 region and ends after the repeated (R) region which is present at both ends of viral RNA. The portion of the RNA-DNA heteroduplex is digested by the RNase H, resulting in a ssDNA product attached to the tRNA primer. This ssDNA/tRNA hybridizes with the identical R region situated at the 3' end of viral RNA. This template exchange, known as minus-strand DNA strong stop transfer, can be either intra- or intermolecular. RT uses the 3' end of this newly synthesized short ssDNA to perform the RNA-dependent minus-strand DNA synthesis of the whole template. RNase H digests the RNA template except for two polypurine tracts (PPTs) situated at the 5'-end and near the center of the genome. It is not clear if both polymerase and RNase H activities are simultaneous. RNase H probably can proceed both in a polymerase-dependent (RNA cut into small fragments by the same RT performing DNA synthesis) and a polymerase-independent mode (cleavage of remaining RNA fragments by free RTs). Secondly, RT performs DNA-directed plus-strand DNA synthesis using the PPTs that have not been removed by RNase H as primers. PPTs and tRNA primers are then removed by RNase H. The 3' and 5' ssDNA PBS regions hybridize to form a circular dsDNA intermediate. Strand displacement synthesis by RT to the PBS and PPT ends produces a blunt ended, linear dsDNA copy of the viral genome that includes long terminal repeats (LTRs) at both ends. In terms of biological role, catalyzes viral DNA integration into the host chromosome, by performing a series of DNA cutting and joining reactions. This enzyme activity takes place after virion entry into a cell and reverse transcription of the RNA genome in dsDNA. The first step in the integration process is 3' processing. This step requires a complex comprising the viral genome, matrix protein, Vpr and integrase. This complex is called the pre-integration complex (PIC). The integrase protein removes 2 nucleotides from each 3' end of the viral DNA, leaving recessed CA OH's at the 3' ends. In the second step, the PIC enters cell nucleus. This process is mediated through integrase and Vpr proteins, and allows the virus to infect a non dividing cell. This ability to enter the nucleus is specific of lentiviruses, other retroviruses cannot and rely on cell division to access cell chromosomes. In the third step, termed strand transfer, the integrase protein joins the previously processed 3' ends to the 5' ends of strands of target cellular DNA at the site of integration. The 5'-ends are produced by integrase-catalyzed staggered cuts, 5 bp apart. A Y-shaped, gapped, recombination intermediate results, with the 5'-ends of the viral DNA strands and the 3' ends of target DNA strands remaining unjoined, flanking a gap of 5 bp. The last step is viral DNA integration into host chromosome. This involves host DNA repair synthesis in which the 5 bp gaps between the unjoined strands are filled in and then ligated. Since this process occurs at both cuts flanking the HIV genome, a 5 bp duplication of host DNA is produced at the ends of HIV-1 integration. Alternatively, Integrase may catalyze the excision of viral DNA just after strand transfer, this is termed disintegration. In Human immunodeficiency virus type 2 subtype A (isolate D194) (HIV-2), this protein is Gag-Pol polyprotein (gag-pol).